Here is a 271-residue protein sequence, read N- to C-terminus: Extracellular metalloprotease TRV_06892 (271 aa).

Positions 1–19 are cleaved as a signal peptide; it reads MRFSVLLTGLAAAGSIATA. The N-linked (GlcNAc...) asparagine glycan is linked to N136. H185 contributes to the Zn(2+) binding site. The active site involves E186. Residue H189 coordinates Zn(2+). An N-linked (GlcNAc...) asparagine glycan is attached at N200. A disulfide bond links C222 and C248.

This sequence belongs to the peptidase M43B family.

The protein localises to the secreted. Its function is as follows. Secreted metalloproteinase that allows assimilation of proteinaceous substrates. Plays a pivotal role as a pathogenicity determinant during infections and contributes to the ability of the pathogen to persist within the mammalian host. The sequence is that of Extracellular metalloprotease TRV_06892 from Trichophyton verrucosum (strain HKI 0517).